Here is a 491-residue protein sequence, read N- to C-terminus: Nucleoside transporter 1.1 (491 aa).

6 helical membrane passes run 27-47, 82-102, 109-129, 136-156, 173-193, and 209-229; these read FYVY…VNAV, YNLI…LSWF, VRLL…MVVP, AGAV…KSIF, STMM…QIIV, and KIYY…LILL. Residues 260 to 273 are compositionally biased toward basic and acidic residues; sequence CHTDEHPTHDKEGR. Disordered stretches follow at residues 260-280 and 290-309; these read CHTD…SGKE and AAAK…PHEV. Residue Asn274 is glycosylated (N-linked (GlcNAc...) asparagine). 5 helical membrane-spanning segments follow: residues 333–353, 361–381, 395–415, 427–447, and 460–480; these read MFVA…GIAV, WFST…RFSP, WIIV…LLHS, VMEV…LVLG, and FVAG…GTVL.

The protein belongs to the SLC29A/ENT transporter (TC 2.A.57) family.

It is found in the membrane. The enzyme catalyses adenosine(in) + H(+)(in) = adenosine(out) + H(+)(out). It catalyses the reaction uridine(in) + H(+)(in) = uridine(out) + H(+)(out). In terms of biological role, sodium-independent high affinity nucleoside:H(+) symporter; transports adenosine and uridine. Can transport cytidine and thymidine. In Leishmania donovani, this protein is Nucleoside transporter 1.1.